Here is a 206-residue protein sequence, read N- to C-terminus: Pyridoxine/pyridoxamine 5'-phosphate oxidase (206 aa).

Residues 53 to 58, 68 to 69, lysine 75, and glutamine 97 contribute to the FMN site; these read RMVLLK and YT. Residue lysine 58 coordinates substrate. Residues tyrosine 115, arginine 119, and serine 123 each coordinate substrate. FMN is bound by residues 132–133 and tryptophan 177; that span reads QS. 183 to 185 is a binding site for substrate; that stretch reads RLH. FMN is bound at residue arginine 187.

The protein belongs to the pyridoxamine 5'-phosphate oxidase family. Homodimer. The cofactor is FMN.

The catalysed reaction is pyridoxamine 5'-phosphate + O2 + H2O = pyridoxal 5'-phosphate + H2O2 + NH4(+). The enzyme catalyses pyridoxine 5'-phosphate + O2 = pyridoxal 5'-phosphate + H2O2. The protein operates within cofactor metabolism; pyridoxal 5'-phosphate salvage; pyridoxal 5'-phosphate from pyridoxamine 5'-phosphate: step 1/1. Its pathway is cofactor metabolism; pyridoxal 5'-phosphate salvage; pyridoxal 5'-phosphate from pyridoxine 5'-phosphate: step 1/1. Functionally, catalyzes the oxidation of either pyridoxine 5'-phosphate (PNP) or pyridoxamine 5'-phosphate (PMP) into pyridoxal 5'-phosphate (PLP). The protein is Pyridoxine/pyridoxamine 5'-phosphate oxidase of Rhizobium johnstonii (strain DSM 114642 / LMG 32736 / 3841) (Rhizobium leguminosarum bv. viciae).